Consider the following 537-residue polypeptide: 2-isopropylmalate synthase (537 aa).

The Pyruvate carboxyltransferase domain maps to 8–269 (VLIFDTTLRD…YFNGYLGRAE (262 aa)). The Mn(2+) site is built by aspartate 17, histidine 208, histidine 210, and asparagine 244. Residues 408 to 537 (QLAGVQVSCG…QRAPLPAPAL (130 aa)) are regulatory domain.

It belongs to the alpha-IPM synthase/homocitrate synthase family. LeuA type 1 subfamily. As to quaternary structure, homodimer. Mn(2+) serves as cofactor.

Its subcellular location is the cytoplasm. It catalyses the reaction 3-methyl-2-oxobutanoate + acetyl-CoA + H2O = (2S)-2-isopropylmalate + CoA + H(+). It participates in amino-acid biosynthesis; L-leucine biosynthesis; L-leucine from 3-methyl-2-oxobutanoate: step 1/4. Its function is as follows. Catalyzes the condensation of the acetyl group of acetyl-CoA with 3-methyl-2-oxobutanoate (2-ketoisovalerate) to form 3-carboxy-3-hydroxy-4-methylpentanoate (2-isopropylmalate). This Synechococcus sp. (strain RCC307) protein is 2-isopropylmalate synthase.